We begin with the raw amino-acid sequence, 368 residues long: uncharacterized protein (368 aa).

This sequence belongs to the Gfo/Idh/MocA family.

This is an uncharacterized protein from Schizosaccharomyces pombe (strain 972 / ATCC 24843) (Fission yeast).